The sequence spans 324 residues: Beta-ketoacyl-[acyl-carrier-protein] synthase III (324 aa).

Catalysis depends on residues Cys-112 and His-249. The tract at residues 250–254 (QANRR) is ACP-binding. The active site involves Asn-279.

It belongs to the thiolase-like superfamily. FabH family. As to quaternary structure, homodimer.

The protein localises to the cytoplasm. It catalyses the reaction malonyl-[ACP] + acetyl-CoA + H(+) = 3-oxobutanoyl-[ACP] + CO2 + CoA. The protein operates within lipid metabolism; fatty acid biosynthesis. Catalyzes the condensation reaction of fatty acid synthesis by the addition to an acyl acceptor of two carbons from malonyl-ACP. Catalyzes the first condensation reaction which initiates fatty acid synthesis and may therefore play a role in governing the total rate of fatty acid production. Possesses both acetoacetyl-ACP synthase and acetyl transacylase activities. Its substrate specificity determines the biosynthesis of branched-chain and/or straight-chain of fatty acids. The sequence is that of Beta-ketoacyl-[acyl-carrier-protein] synthase III from Streptococcus pyogenes serotype M2 (strain MGAS10270).